The chain runs to 476 residues: G-patch domain and KOW motifs-containing protein (476 aa).

The tract at residues 1–96 (MADSKEGVLP…PGPSTDTGAL (96 aa)) is disordered. Ala-2 carries the post-translational modification N-acetylalanine. Lys-5 participates in a covalent cross-link: Glycyl lysine isopeptide (Lys-Gly) (interchain with G-Cter in SUMO2). The segment covering 13–26 (AASTAPISFGFTRT) has biased composition (polar residues). A Phosphoserine; by PKA modification is found at Ser-27. Residues Ser-35 and Ser-42 each carry the phosphoserine modification. Over residues 43–58 (PEEKDFLKTVEGRELQ) the composition is skewed to basic and acidic residues. Ser-115 carries the phosphoserine modification. The G-patch domain maps to 164-210 (VEAYGLAMLRGMGWKPGEGIGRTFNQVVKPRVNSLRPKGLGLGANLT). The disordered stretch occupies residues 203–244 (LGLGANLTEAQALTPTGPSRMPRPDEEQEKDKEDQPQGLVPG). Polar residues predominate over residues 210-219 (TEAQALTPTG). Phosphothreonine is present on Thr-216. The span at 224–237 (PRPDEEQEKDKEDQ) shows a compositional bias: basic and acidic residues. The KOW 1 domain maps to 240–267 (GLVPGGAVVVLSGPHRGLYGKVEGLDPD). The residue at position 316 (Thr-316) is a Phosphothreonine; by PKA. The disordered stretch occupies residues 327–353 (DNSERKRKHLPDRQDGPAAKSEKAAPR). Positions 337-351 (PDRQDGPAAKSEKAA) are enriched in basic and acidic residues. The 28-residue stretch at 415 to 442 (PKAEGDRVMVVLGPQTGRVGHLLSRDRA) folds into the KOW 2 domain. Phosphoserine is present on Ser-471. A Phosphothreonine modification is found at Thr-473.

The protein belongs to the MOS2 family. Component of the minor spliceosome, which splices U12-type introns. Interacts with PRKX. Interacts with DHX16. Interacts with PRKACB. Post-translationally, phosphorylation regulates its ability to bind RNA.

It localises to the nucleus. Its function is as follows. RNA-binding protein involved in pre-mRNA splicing. As a component of the minor spliceosome, involved in the splicing of U12-type introns in pre-mRNAs. The sequence is that of G-patch domain and KOW motifs-containing protein (GPKOW) from Homo sapiens (Human).